We begin with the raw amino-acid sequence, 365 residues long: 2-aminoethylphosphonate--pyruvate transaminase (365 aa).

Position 194 is an N6-(pyridoxal phosphate)lysine (Lys-194).

It belongs to the class-V pyridoxal-phosphate-dependent aminotransferase family. PhnW subfamily. As to quaternary structure, homodimer. Pyridoxal 5'-phosphate is required as a cofactor.

The enzyme catalyses (2-aminoethyl)phosphonate + pyruvate = phosphonoacetaldehyde + L-alanine. Involved in phosphonate degradation. The protein is 2-aminoethylphosphonate--pyruvate transaminase of Bacillus cereus (strain Q1).